A 326-amino-acid chain; its full sequence is Tagatose 1,6-diphosphate aldolase 2 (326 aa).

The protein belongs to the aldolase LacD family.

The enzyme catalyses D-tagatofuranose 1,6-bisphosphate = D-glyceraldehyde 3-phosphate + dihydroxyacetone phosphate. The protein operates within carbohydrate metabolism; D-tagatose 6-phosphate degradation; D-glyceraldehyde 3-phosphate and glycerone phosphate from D-tagatose 6-phosphate: step 2/2. The sequence is that of Tagatose 1,6-diphosphate aldolase 2 (lacD2) from Streptococcus agalactiae serotype III (strain NEM316).